The following is a 503-amino-acid chain: Poxin-Schlafen (503 aa).

Positions 1–236 (MFYAHAFGGY…SKEERVDYVL (236 aa)) are poxin-like. The active-site Proton donor is H15. Y136 acts as the Shared with catalytic histidine of dimeric partner in catalysis. K140 acts as the Proton acceptor; shared with catalytic histidine of dimeric partner in catalysis. Positions 237-503 (MKRLESIHHL…PDEWVSHIKF (267 aa)) are schlafen-like.

This sequence in the N-terminal section; belongs to the poxin family. The protein in the C-terminal section; belongs to the Schlafen protein family. Subgroup poxviridae B3 subfamily. In terms of assembly, homodimer.

It carries out the reaction 2',3'-cGAMP + H2O = Gp(2'-5')Ap(3') + H(+). In terms of biological role, nuclease that is responsible for viral evasion of host cGAS-STING innate immunity. Cleaves 2',3'-cGAMP which is produced by host cGAS following recognition of intracellular foreign DNA and blocks the subsequent 2',3'-cGAMP-mediated activation of TMEM173/STING which normally spreads to adjacent cells and activates the interferon and NF-kappa-B immune responses. This Cynomys gunnisoni (Gunnison's prairie dog) protein is Poxin-Schlafen (OPG188).